We begin with the raw amino-acid sequence, 289 residues long: MKRILSIQSHVVFGCAGNSAAVFPMRRMGMEVWPINTVQFSNHTQYQQGWKGIAMPAGHISELVDGLSAIEATQVCDAVLSGYLGSAAQGQEIVTAVNKIKQDNPNAIYFCDPVMGHPEKGCIVAPEVETFFKESALSSADIIAPNLLELESLTGMTINTLDQVIEANNQLLEKGVKMVVVKHLSRAGIQKDRFEMLLTTEDGSYHVSRPLYDFDAKRQPVGAGDLISGVMLANLMAGYSPIDAFERTNAAVDSVMQETFNRGAYELQLIASQERFNAPEIIVKAEKVA.

Substrate contacts are provided by residues serine 9 and 44-45 (TQ). 4 residues coordinate ATP: aspartate 112, alanine 144, glutamate 149, and lysine 182. Position 225 (aspartate 225) interacts with substrate.

Belongs to the pyridoxine kinase family. PdxY subfamily. Homodimer. Mg(2+) is required as a cofactor.

It carries out the reaction pyridoxal + ATP = pyridoxal 5'-phosphate + ADP + H(+). It functions in the pathway cofactor metabolism; pyridoxal 5'-phosphate salvage; pyridoxal 5'-phosphate from pyridoxal: step 1/1. Pyridoxal kinase involved in the salvage pathway of pyridoxal 5'-phosphate (PLP). Catalyzes the phosphorylation of pyridoxal to PLP. The sequence is that of Pyridoxal kinase PdxY from Aliivibrio fischeri (strain ATCC 700601 / ES114) (Vibrio fischeri).